Consider the following 425-residue polypeptide: Proline iminopeptidase (425 aa).

Residues 52-315 (PWLLYLQGGP…EFPALAWAQG (264 aa)) enclose the AB hydrolase-1 domain. Serine 146 functions as the Nucleophile in the catalytic mechanism. The active site involves aspartate 351. Histidine 404 functions as the Proton donor in the catalytic mechanism.

It belongs to the peptidase S33 family. In terms of assembly, homotetramer.

It localises to the cytoplasm. It catalyses the reaction Release of N-terminal proline from a peptide.. Its function is as follows. Higher activity toward long peptides. Acts on hydroxyproline beta-naphthylamide with almost as high an activity as on proline beta-naphthylamide. This Aeromonas sobria protein is Proline iminopeptidase (pip).